The primary structure comprises 1434 residues: Probable ATP-dependent RNA helicase spindle-E (1434 aa).

In terms of domain architecture, Helicase ATP-binding spans 125-292; the sequence is LAAINAHPVI…FATTNSIPPV (168 aa). Residue 138–145 coordinates ATP; sequence GETGCGKT. The DEAH box motif lies at 238–241; it reads DEVH. Positions 339 to 526 constitute a Helicase C-terminal domain; the sequence is KIIVIIDNME…NSVLKAKVLN (188 aa). Residues 938–1001 form the Tudor domain; the sequence is AGDITKGMMV…RLMPRELTEQ (64 aa).

Belongs to the DEAD box helicase family. DEAH subfamily.

It is found in the cytoplasm. The catalysed reaction is ATP + H2O = ADP + phosphate + H(+). Functionally, probable ATP-binding RNA helicase which plays a central role during spermatogenesis and oogenesis by repressing transposable elements and preventing their mobilization, which is essential for the germline integrity. Acts via the piRNA metabolic process, which mediates the repression of transposable elements during meiosis by forming complexes composed of piRNAs and Piwi and govern the methylation and subsequent repression of transposons. Involved in the repression of LTR retrotransposon copia. Also involved in telomere regulation by repressing specialized telomeric retroelements HeT-A, TAHRE, and TART; Drosophila telomeres being maintained by transposition of specialized telomeric retroelements. Involved in telomeric trans-silencing, a repression mechanism by which a transposon or a transgene inserted in subtelomeric heterochromatin has the capacity to repress in trans in the female germline, a homologous transposon, or transgene located in euchromatin. Involved in the repression of testis-expressed Stellate genes by the homologous Su(Ste) repeats. Required for anteroposterior and dorsoventral axis formation during oogenesis. The polypeptide is Probable ATP-dependent RNA helicase spindle-E (spn-E) (Drosophila sechellia (Fruit fly)).